The chain runs to 435 residues: Cell adhesion molecule 2 (435 aa).

An N-terminal signal peptide occupies residues 1–24; sequence MIWKRSAVLRFYSVCGLLLLGSQG. Residues 25 to 367 lie on the Extracellular side of the membrane; the sequence is QFPLTQNVTV…SLAGQNGPDH (343 aa). The 93-residue stretch at 27–119 folds into the Ig-like V-type domain; the sequence is PLTQNVTVVE…PVKTSKAYLT (93 aa). N-linked (GlcNAc...) asparagine glycans are attached at residues Asn31 and Asn51. 3 disulfides stabilise this stretch: Cys44–Cys104, Cys146–Cys203, and Cys248–Cys296. 2 Ig-like C2-type domains span residues 127–219 and 227–312; these read PQIS…VAMQ and PSVK…YVLI. The N-linked (GlcNAc...) asparagine glycan is linked to Asn291. The segment covering 341–351 has biased composition (low complexity); that stretch reads TTSPSTSASSS. A disordered region spans residues 341-360; that stretch reads TTSPSTSASSSSRRDPNSLA. A helical transmembrane segment spans residues 368 to 388; sequence ALIGGIVAVVVFVTLCSIFLL. Residues 389–435 are Cytoplasmic-facing; the sequence is GRYLARHKGTYLTNEAKGAEDAPDADTAIINAEGSQVNAEEKKEYFI. Ser423 carries the phosphoserine modification.

It belongs to the nectin family. Glycosylation at Asn-51 reduces adhesive binding.

Its subcellular location is the cell membrane. The protein resides in the synapse. It localises to the cell projection. It is found in the axon. In terms of biological role, adhesion molecule that engages in homo- and heterophilic interactions with the other nectin-like family members, leading to cell aggregation. Important for synapse organization, providing regulated trans-synaptic adhesion. Preferentially binds to oligodendrocytes. The sequence is that of Cell adhesion molecule 2 (Cadm2) from Rattus norvegicus (Rat).